The sequence spans 206 residues: Small ribosomal subunit protein uS4 (206 aa).

The S4 RNA-binding domain occupies 96–156 (GRLDNVVYRM…EKAKKQARIK (61 aa)).

It belongs to the universal ribosomal protein uS4 family. In terms of assembly, part of the 30S ribosomal subunit. Contacts protein S5. The interaction surface between S4 and S5 is involved in control of translational fidelity.

In terms of biological role, one of the primary rRNA binding proteins, it binds directly to 16S rRNA where it nucleates assembly of the body of the 30S subunit. With S5 and S12 plays an important role in translational accuracy. This is Small ribosomal subunit protein uS4 from Aeromonas hydrophila subsp. hydrophila (strain ATCC 7966 / DSM 30187 / BCRC 13018 / CCUG 14551 / JCM 1027 / KCTC 2358 / NCIMB 9240 / NCTC 8049).